A 214-amino-acid chain; its full sequence is Thymidylate kinase (214 aa).

10-17 (GGEGAGKS) contributes to the ATP binding site.

Belongs to the thymidylate kinase family.

It catalyses the reaction dTMP + ATP = dTDP + ADP. Its function is as follows. Phosphorylation of dTMP to form dTDP in both de novo and salvage pathways of dTTP synthesis. The protein is Thymidylate kinase of Brucella suis (strain ATCC 23445 / NCTC 10510).